Here is a 512-residue protein sequence, read N- to C-terminus: Glutathione-binding protein GsiB (512 aa).

The first 26 residues, 1–26 (MTQFITHKWLAALGLASSIAAFPALA), serve as a signal peptide directing secretion.

This sequence belongs to the bacterial solute-binding protein 5 family. The complex is composed of two ATP-binding proteins (GsiA), two transmembrane proteins (GsiC and GsiD) and a solute-binding protein (GsiB).

Its subcellular location is the periplasm. In terms of biological role, part of the ABC transporter complex GsiABCD involved in glutathione import. Binds glutathione. This is Glutathione-binding protein GsiB from Salmonella paratyphi A (strain ATCC 9150 / SARB42).